Reading from the N-terminus, the 710-residue chain is MSAQGDCEFLVQRARELVPQDLWAAKAWLITARSLYPADFNIQYEMYTIERNAERTATAGRLLYDMFVNFPDQPVVWREISIITSALRNDSQDKQTQFLRSLFETLPGRVQCEMLLKVTEQCFNTLERSEMLLLLLRRFPETVVQHGVGLGEALLEAETIEEQDSPVNCFRKLFVCDVLPLIINNHDVRLPANLLYKYLNKAAEFYINYVTRSTQSENQHQGAQDTSDLMSPSKRSSQKYIIEGLTEKSSHIVDPWERLFKILNVVGMRCEWQMDKGRRSCSDLLHRMKELCRYMNSFDSEAHNNYKNQVLYSTMLVFFKSAFQYVSSIQPSLFQGPNAPSQVPLILLEDVANVYGDVEIDRSKHIHKKRKLAEGREKTMSSDDEECSAKGRNRHIVVSKADLSNSIEVLESFKLARESWELLYSLEFLDKEFTRICLAWKTDTWLWLRIFLTDMIIYQGQYKKAIASLHHLAALQGSLSQPQITGQGTLEHQRALIQLATCHFALGEYRMTCEKVLDLMCYMVLPIQDGGKPQEEPSKVKPKCRKGLDLKLLPCTSKAIMPYCLHLMLACFKLRAFTDSRDDMALGHVIVLLQQEWPRGENLFLKAISKICQQGNFQYENFFSYVTNIDMLEEFAYLRTQEGGKIHLELLPNQGMLIKHHTVTRGITKGVKEDFRLAMERQVSRCGENLMAVLHRFCINEKILLLQTLT.

Serine 231, serine 381, and serine 382 each carry phosphoserine. A Glycyl lysine isopeptide (Lys-Gly) (interchain with G-Cter in SUMO2) cross-link involves residue lysine 464.

This sequence belongs to the Integrator subunit 10 family. In terms of assembly, component of the Integrator complex, composed of core subunits INTS1, INTS2, INTS3, INTS4, INTS5, INTS6, INTS7, INTS8, INTS9/RC74, INTS10, INTS11/CPSF3L, INTS12, INTS13, INTS14 and INTS15. The core complex associates with protein phosphatase 2A subunits PPP2CA and PPP2R1A, to form the Integrator-PP2A (INTAC) complex. INTS10 is part of the tail subcomplex, composed of INTS10, INTS13, INTS14 and INTS15.

It localises to the nucleus. Its function is as follows. Component of the integrator complex, a multiprotein complex that terminates RNA polymerase II (Pol II) transcription in the promoter-proximal region of genes. The integrator complex provides a quality checkpoint during transcription elongation by driving premature transcription termination of transcripts that are unfavorably configured for transcriptional elongation: the complex terminates transcription by (1) catalyzing dephosphorylation of the C-terminal domain (CTD) of Pol II subunit POLR2A/RPB1 and SUPT5H/SPT5, (2) degrading the exiting nascent RNA transcript via endonuclease activity and (3) promoting the release of Pol II from bound DNA. The integrator complex is also involved in terminating the synthesis of non-coding Pol II transcripts, such as enhancer RNAs (eRNAs), small nuclear RNAs (snRNAs), telomerase RNAs and long non-coding RNAs (lncRNAs). Within the integrator complex, INTS10 is part of the integrator tail module that acts as a platform for the recruitment of transcription factors at promoters. May be not involved in the recruitment of cytoplasmic dynein to the nuclear envelope, probably as component of the integrator complex. The protein is Integrator complex subunit 10 (Ints10) of Mus musculus (Mouse).